A 427-amino-acid chain; its full sequence is Dihydroorotase (427 aa).

Zn(2+) contacts are provided by histidine 57 and histidine 59. Residues histidine 59 to arginine 61 and asparagine 91 each bind substrate. Positions 149, 176, and 229 each coordinate Zn(2+). Position 275 (asparagine 275) interacts with substrate. Aspartate 302 contributes to the Zn(2+) binding site. Aspartate 302 is an active-site residue. Residues histidine 306 and phenylalanine 320–glycine 321 contribute to the substrate site.

This sequence belongs to the metallo-dependent hydrolases superfamily. DHOase family. Class I DHOase subfamily. The cofactor is Zn(2+).

The enzyme catalyses (S)-dihydroorotate + H2O = N-carbamoyl-L-aspartate + H(+). It participates in pyrimidine metabolism; UMP biosynthesis via de novo pathway; (S)-dihydroorotate from bicarbonate: step 3/3. Catalyzes the reversible cyclization of carbamoyl aspartate to dihydroorotate. The protein is Dihydroorotase of Shouchella clausii (strain KSM-K16) (Alkalihalobacillus clausii).